A 336-amino-acid polypeptide reads, in one-letter code: Methionyl-tRNA formyltransferase (336 aa).

(6S)-5,6,7,8-tetrahydrofolate is bound at residue 112–115 (SILP).

This sequence belongs to the Fmt family.

The enzyme catalyses L-methionyl-tRNA(fMet) + (6R)-10-formyltetrahydrofolate = N-formyl-L-methionyl-tRNA(fMet) + (6S)-5,6,7,8-tetrahydrofolate + H(+). Its function is as follows. Attaches a formyl group to the free amino group of methionyl-tRNA(fMet). The formyl group appears to play a dual role in the initiator identity of N-formylmethionyl-tRNA by promoting its recognition by IF2 and preventing the misappropriation of this tRNA by the elongation apparatus. The chain is Methionyl-tRNA formyltransferase from Trichodesmium erythraeum (strain IMS101).